We begin with the raw amino-acid sequence, 770 residues long: Probable methyltransferase PMT24 (770 aa).

The Cytoplasmic portion of the chain corresponds to 1–17; sequence MAMGKYSRVDGKKSSGY. Residues 18–38 form a helical; Signal-anchor for type II membrane protein membrane-spanning segment; sequence GLTITIVLIVSLCLVGAWMFM. Topologically, residues 39 to 770 are lumenal; sequence SSWSAPTESI…EAETIQSAIA (732 aa). 2 stretches are compositionally biased toward basic and acidic residues: residues 54 to 81 and 93 to 164; these read ERTK…FPDE and NEEK…KSED. The tract at residues 54–223 is disordered; the sequence is ERTKDVDTTK…STGSGAWSTQ (170 aa). Residues N160 and N166 are each glycosylated (N-linked (GlcNAc...) asparagine). Residues 212 to 223 show a composition bias toward polar residues; that stretch reads ESSTGSGAWSTQ. N-linked (GlcNAc...) asparagine glycosylation is found at N244 and N363.

This sequence belongs to the methyltransferase superfamily.

The protein resides in the golgi apparatus membrane. In Arabidopsis thaliana (Mouse-ear cress), this protein is Probable methyltransferase PMT24.